We begin with the raw amino-acid sequence, 170 residues long: MKRILLLGLALAPVALFASQGAVETDIVQRTVNFIIFAAILWYLLADKIKAFFANRTLSIQAELDKVQETLKASQDKVTDAQKKLEEARKLAAEIIESAKTDIDSVKQKVTTAVDADITNLNRNLEEMMKIETSKAKKQVVAEVLEELLSSENIKLTQQELVDVVLKKVA.

A helical transmembrane segment spans residues 4–24 (ILLLGLALAPVALFASQGAVE).

It belongs to the ATPase B chain family. F-type ATPases have 2 components, F(1) - the catalytic core - and F(0) - the membrane proton channel. F(1) has five subunits: alpha(3), beta(3), gamma(1), delta(1), epsilon(1). F(0) has three main subunits: a(1), b(2) and c(10-14). The alpha and beta chains form an alternating ring which encloses part of the gamma chain. F(1) is attached to F(0) by a central stalk formed by the gamma and epsilon chains, while a peripheral stalk is formed by the delta and b chains.

The protein resides in the cell inner membrane. In terms of biological role, f(1)F(0) ATP synthase produces ATP from ADP in the presence of a proton or sodium gradient. F-type ATPases consist of two structural domains, F(1) containing the extramembraneous catalytic core and F(0) containing the membrane proton channel, linked together by a central stalk and a peripheral stalk. During catalysis, ATP synthesis in the catalytic domain of F(1) is coupled via a rotary mechanism of the central stalk subunits to proton translocation. Functionally, component of the F(0) channel, it forms part of the peripheral stalk, linking F(1) to F(0). This Aliarcobacter butzleri (strain RM4018) (Arcobacter butzleri) protein is ATP synthase subunit b.